The following is a 119-amino-acid chain: Fluoride-specific ion channel FluC (119 aa).

4 consecutive transmembrane segments (helical) span residues 5–25 (IIPLSIGAALGATARWLLNLA), 30–50 (IPPATGNLFANWIGAFLIGIF), 59–79 (WKLLLITGFLGSLTTLSGFSL), and 97–117 (IFLHTAGSLLLTWLGLKIGAA). Residues Gly69 and Thr72 each coordinate Na(+).

Belongs to the fluoride channel Fluc/FEX (TC 1.A.43) family.

It is found in the cell inner membrane. It carries out the reaction fluoride(in) = fluoride(out). With respect to regulation, na(+) is not transported, but it plays an essential structural role and its presence is essential for fluoride channel function. In terms of biological role, fluoride-specific ion channel. Important for reducing fluoride concentration in the cell, thus reducing its toxicity. This is Fluoride-specific ion channel FluC from Neisseria meningitidis serogroup B (strain ATCC BAA-335 / MC58).